A 383-amino-acid polypeptide reads, in one-letter code: S-adenosylmethionine synthase 1 (383 aa).

Residue H15 coordinates ATP. D17 serves as a coordination point for Mg(2+). E43 lines the K(+) pocket. The L-methionine site is built by E56 and Q99. Residues 99-109 (QSPDINLGVSR) form a flexible loop region. ATP is bound by residues 162–164 (DGK), 228–229 (RF), D237, 243–244 (RK), A260, and K264. D237 provides a ligand contact to L-methionine. K268 serves as a coordination point for L-methionine.

This sequence belongs to the AdoMet synthase family. In terms of assembly, homotetramer; dimer of dimers. Mg(2+) is required as a cofactor. The cofactor is K(+).

The protein localises to the cytoplasm. It carries out the reaction L-methionine + ATP + H2O = S-adenosyl-L-methionine + phosphate + diphosphate. The protein operates within amino-acid biosynthesis; S-adenosyl-L-methionine biosynthesis; S-adenosyl-L-methionine from L-methionine: step 1/1. In terms of biological role, catalyzes the formation of S-adenosylmethionine (AdoMet) from methionine and ATP. The overall synthetic reaction is composed of two sequential steps, AdoMet formation and the subsequent tripolyphosphate hydrolysis which occurs prior to release of AdoMet from the enzyme. The protein is S-adenosylmethionine synthase 1 of Rhodopseudomonas palustris (strain BisB18).